We begin with the raw amino-acid sequence, 440 residues long: Proline--tRNA ligase (440 aa).

The protein belongs to the class-II aminoacyl-tRNA synthetase family. ProS type 2 subfamily. Homodimer.

It localises to the cytoplasm. The catalysed reaction is tRNA(Pro) + L-proline + ATP = L-prolyl-tRNA(Pro) + AMP + diphosphate. Its function is as follows. Catalyzes the attachment of proline to tRNA(Pro) in a two-step reaction: proline is first activated by ATP to form Pro-AMP and then transferred to the acceptor end of tRNA(Pro). This Agrobacterium fabrum (strain C58 / ATCC 33970) (Agrobacterium tumefaciens (strain C58)) protein is Proline--tRNA ligase.